The sequence spans 131 residues: Profilin-2 (131 aa).

This sequence belongs to the profilin family. In terms of assembly, occurs in many kinds of cells as a complex with monomeric actin in a 1:1 ratio.

The protein resides in the cytoplasm. It localises to the cytoskeleton. In terms of biological role, binds to actin and affects the structure of the cytoskeleton. At high concentrations, profilin prevents the polymerization of actin, whereas it enhances it at low concentrations. By binding to PIP2, it inhibits the formation of IP3 and DG. This Malus domestica (Apple) protein is Profilin-2.